A 164-amino-acid chain; its full sequence is Cytochrome c-type biogenesis protein CcmE (164 aa).

Residues 1-8 lie on the Cytoplasmic side of the membrane; it reads MNPRRKQR. The helical; Signal-anchor for type II membrane protein transmembrane segment at 9-29 threads the bilayer; it reads LAVVGIIGFLIVSAVGLMLYA. The Periplasmic segment spans residues 30-164; it reads LNDSIDLFYT…YESSNGAGSK (135 aa). Heme contacts are provided by His-128 and Tyr-132. Positions 142 to 164 are disordered; that stretch reads KGIKHVKPENMPTYESSNGAGSK. Residues 154-164 are compositionally biased toward polar residues; that stretch reads TYESSNGAGSK.

Belongs to the CcmE/CycJ family.

The protein resides in the cell inner membrane. Functionally, heme chaperone required for the biogenesis of c-type cytochromes. Transiently binds heme delivered by CcmC and transfers the heme to apo-cytochromes in a process facilitated by CcmF and CcmH. The protein is Cytochrome c-type biogenesis protein CcmE of Alteromonas mediterranea (strain DSM 17117 / CIP 110805 / LMG 28347 / Deep ecotype).